The primary structure comprises 129 residues: Small ribosomal subunit protein uS13m (129 aa).

The disordered stretch occupies residues 92 to 129; the sequence is HQDGSPLRGQRTHTNARTARKQIRKGNERRLPKEQATD. Basic and acidic residues predominate over residues 116-129; it reads KGNERRLPKEQATD.

It belongs to the universal ribosomal protein uS13 family. As to quaternary structure, part of the small ribosomal subunit.

It is found in the mitochondrion. Functionally, located at the top of the head of the small subunit, it contacts several helices of the 18S rRNA. This Zea mays (Maize) protein is Small ribosomal subunit protein uS13m (RPS13).